Reading from the N-terminus, the 230-residue chain is Protein STK_02290 (230 aa).

One can recognise an AMMECR1 domain in the interval 15-213 (NLGKVLIKIA…EEKPKSEKIL (199 aa)).

The sequence is that of Protein STK_02290 from Sulfurisphaera tokodaii (strain DSM 16993 / JCM 10545 / NBRC 100140 / 7) (Sulfolobus tokodaii).